The chain runs to 338 residues: Flap endonuclease 1 (338 aa).

The tract at residues 1–98 (MGVNLSSILI…ETLRERSLIK (98 aa)) is N-domain. 7 residues coordinate Mg(2+): Asp-27, Asp-80, Glu-152, Glu-154, Asp-173, Asp-175, and Asp-236. An I-domain region spans residues 116–257 (KIRSLSSRIN…TALSLIKKYN (142 aa)). Residues 330–338 (HQSSLDRFF) form an interaction with PCNA region.

It belongs to the XPG/RAD2 endonuclease family. FEN1 subfamily. In terms of assembly, interacts with PCNA. PCNA stimulates the nuclease activity without altering cleavage specificity. Requires Mg(2+) as cofactor.

Structure-specific nuclease with 5'-flap endonuclease and 5'-3' exonuclease activities involved in DNA replication and repair. During DNA replication, cleaves the 5'-overhanging flap structure that is generated by displacement synthesis when DNA polymerase encounters the 5'-end of a downstream Okazaki fragment. Binds the unpaired 3'-DNA end and kinks the DNA to facilitate 5' cleavage specificity. Cleaves one nucleotide into the double-stranded DNA from the junction in flap DNA, leaving a nick for ligation. Also involved in the base excision repair (BER) pathway. Acts as a genome stabilization factor that prevents flaps from equilibrating into structures that lead to duplications and deletions. Also possesses 5'-3' exonuclease activity on nicked or gapped double-stranded DNA. The sequence is that of Flap endonuclease 1 from Picrophilus torridus (strain ATCC 700027 / DSM 9790 / JCM 10055 / NBRC 100828 / KAW 2/3).